The sequence spans 196 residues: ATP-dependent Clp protease proteolytic subunit 1 (196 aa).

Ser96 serves as the catalytic Nucleophile. His121 is an active-site residue.

It belongs to the peptidase S14 family. Fourteen ClpP subunits assemble into 2 heptameric rings which stack back to back to give a disk-like structure with a central cavity, resembling the structure of eukaryotic proteasomes.

It is found in the cytoplasm. It catalyses the reaction Hydrolysis of proteins to small peptides in the presence of ATP and magnesium. alpha-casein is the usual test substrate. In the absence of ATP, only oligopeptides shorter than five residues are hydrolyzed (such as succinyl-Leu-Tyr-|-NHMec, and Leu-Tyr-Leu-|-Tyr-Trp, in which cleavage of the -Tyr-|-Leu- and -Tyr-|-Trp bonds also occurs).. Its function is as follows. Cleaves peptides in various proteins in a process that requires ATP hydrolysis. Has a chymotrypsin-like activity. Plays a major role in the degradation of misfolded proteins. The sequence is that of ATP-dependent Clp protease proteolytic subunit 1 from Prochlorococcus marinus (strain SARG / CCMP1375 / SS120).